Consider the following 352-residue polypeptide: Protein RecA (352 aa).

Residue G65–T72 participates in ATP binding.

This sequence belongs to the RecA family.

The protein resides in the cytoplasm. Its function is as follows. Can catalyze the hydrolysis of ATP in the presence of single-stranded DNA, the ATP-dependent uptake of single-stranded DNA by duplex DNA, and the ATP-dependent hybridization of homologous single-stranded DNAs. It interacts with LexA causing its activation and leading to its autocatalytic cleavage. This is Protein RecA from Pseudomonas fluorescens (strain SBW25).